The sequence spans 487 residues: Transmembrane protein 161B (487 aa).

Asn-34 carries an N-linked (GlcNAc...) asparagine glycan. The helical transmembrane segment at 107–127 (LVDFTVAATVVYLVTEVYYNF) threads the bilayer. An N-linked (GlcNAc...) asparagine glycan is attached at Asn-135. 2 consecutive transmembrane segments (helical) span residues 136-156 (ISLV…FSLT) and 169-189 (SVCV…LIVT). An N-linked (GlcNAc...) asparagine glycan is attached at Asn-203. Transmembrane regions (helical) follow at residues 228–248 (FKFF…FPGL), 265–285 (ITQT…LLWV), 305–325 (LMTE…LCAL), 367–387 (VFYY…MLLH), and 459–479 (LSFL…FGLF).

Belongs to the TMEM161 family.

It localises to the cell membrane. Its function is as follows. Essential for maintaining normal cardiac rhythm in the developing heart and for neonatal survival. Inhibits potassium and calcium currents in the cardiomyocytes, this assists in timely action potential repolarization and thereby maintains normal cardiac rhythm. The polypeptide is Transmembrane protein 161B (TMEM161B) (Homo sapiens (Human)).